The chain runs to 89 residues: Putative defensin-like protein 40 (89 aa).

Positions 1–26 (MAGIANGVGLLISFMLICGGMPKGHA) are cleaved as a signal peptide. 4 disulfide bridges follow: Cys33–Cys88, Cys46–Cys69, Cys55–Cys81, and Cys59–Cys83.

This sequence belongs to the DEFL family.

The protein resides in the secreted. The sequence is that of Putative defensin-like protein 40 from Arabidopsis thaliana (Mouse-ear cress).